Consider the following 144-residue polypeptide: Cell division protein SepF (144 aa).

The protein belongs to the SepF family. In terms of assembly, homodimer. Interacts with FtsZ.

It is found in the cytoplasm. In terms of biological role, cell division protein that is part of the divisome complex and is recruited early to the Z-ring. Probably stimulates Z-ring formation, perhaps through the cross-linking of FtsZ protofilaments. Its function overlaps with FtsA. The chain is Cell division protein SepF from Oceanobacillus iheyensis (strain DSM 14371 / CIP 107618 / JCM 11309 / KCTC 3954 / HTE831).